Here is a 169-residue protein sequence, read N- to C-terminus: Probable phospholipid hydroperoxide glutathione peroxidase (169 aa).

The active site involves Cys-43.

This sequence belongs to the glutathione peroxidase family.

The protein localises to the cytoplasm. The catalysed reaction is a hydroperoxy polyunsaturated fatty acid + 2 glutathione = a hydroxy polyunsaturated fatty acid + glutathione disulfide + H2O. Functionally, protects cells and enzymes from oxidative damage, by catalyzing the reduction of hydrogen peroxide, lipid peroxides and organic hydroperoxide, by glutathione. The polypeptide is Probable phospholipid hydroperoxide glutathione peroxidase (Nicotiana tabacum (Common tobacco)).